The chain runs to 180 residues: UPF0149 protein XC_0904 (180 aa).

The protein belongs to the UPF0149 family.

The chain is UPF0149 protein XC_0904 from Xanthomonas campestris pv. campestris (strain 8004).